Consider the following 85-residue polypeptide: MLLSVLLQAAAAGVGLSKLGAALGAGLAVIGAGIGIGKIGGSAMEGIARQPEASGDIRMNMIIAAALVEGVALLALVVCLLVLFL.

A run of 2 helical transmembrane segments spans residues 19–39 (LGAA…IGKI) and 62–82 (IIAA…CLLV).

Belongs to the ATPase C chain family. F-type ATPases have 2 components, F(1) - the catalytic core - and F(0) - the membrane proton channel. F(1) has five subunits: alpha(3), beta(3), gamma(1), delta(1), epsilon(1). F(0) has three main subunits: a(1), b(2) and c(10-14). The alpha and beta chains form an alternating ring which encloses part of the gamma chain. F(1) is attached to F(0) by a central stalk formed by the gamma and epsilon chains, while a peripheral stalk is formed by the delta and b chains.

It localises to the cell inner membrane. F(1)F(0) ATP synthase produces ATP from ADP in the presence of a proton or sodium gradient. F-type ATPases consist of two structural domains, F(1) containing the extramembraneous catalytic core and F(0) containing the membrane proton channel, linked together by a central stalk and a peripheral stalk. During catalysis, ATP synthesis in the catalytic domain of F(1) is coupled via a rotary mechanism of the central stalk subunits to proton translocation. In terms of biological role, key component of the F(0) channel; it plays a direct role in translocation across the membrane. A homomeric c-ring of between 10-14 subunits forms the central stalk rotor element with the F(1) delta and epsilon subunits. The protein is ATP synthase subunit c of Bacteroides fragilis (strain ATCC 25285 / DSM 2151 / CCUG 4856 / JCM 11019 / LMG 10263 / NCTC 9343 / Onslow / VPI 2553 / EN-2).